A 43-amino-acid polypeptide reads, in one-letter code: Delta-actitoxin-Bca1a (43 aa).

3 cysteine pairs are disulfide-bonded: cysteine 1–cysteine 41, cysteine 3–cysteine 31, and cysteine 24–cysteine 42.

The protein localises to the secreted. Its subcellular location is the nematocyst. Functionally, binds specifically to voltage-gated sodium channels (Nav), thereby delaying their inactivation during signal transduction. Thus it strongly stimulates mammalian cardiac muscle contraction. The chain is Delta-actitoxin-Bca1a from Bunodosoma capense (Knobbly sea anemone).